Reading from the N-terminus, the 557-residue chain is Potassium-transporting ATPase potassium-binding subunit (557 aa).

The next 10 membrane-spanning stretches (helical) occupy residues 4–24 (LGAG…VHVP), 61–81 (TYAL…YAFL), 131–151 (GLTV…VALV), 174–194 (LRVL…TGVV), 253–273 (LEVF…GTLV), 280–300 (LAVL…TTWA), 375–395 (GLYG…LMVG), 412–432 (CAAL…AVAL), 483–503 (LAIW…AGAF), and 528–548 (LAVV…LGPI).

It belongs to the KdpA family. In terms of assembly, the system is composed of three essential subunits: KdpA, KdpB and KdpC.

The protein resides in the cell membrane. Part of the high-affinity ATP-driven potassium transport (or Kdp) system, which catalyzes the hydrolysis of ATP coupled with the electrogenic transport of potassium into the cytoplasm. This subunit binds the extracellular potassium ions and delivers the ions to the membrane domain of KdpB through an intramembrane tunnel. The polypeptide is Potassium-transporting ATPase potassium-binding subunit (Kineococcus radiotolerans (strain ATCC BAA-149 / DSM 14245 / SRS30216)).